Consider the following 292-residue polypeptide: 4-hydroxy-tetrahydrodipicolinate synthase (292 aa).

Thr-45 contributes to the pyruvate binding site. Tyr-133 serves as the catalytic Proton donor/acceptor. Residue Lys-161 is the Schiff-base intermediate with substrate of the active site. Ile-203 lines the pyruvate pocket.

This sequence belongs to the DapA family. As to quaternary structure, homotetramer; dimer of dimers.

The protein localises to the cytoplasm. It catalyses the reaction L-aspartate 4-semialdehyde + pyruvate = (2S,4S)-4-hydroxy-2,3,4,5-tetrahydrodipicolinate + H2O + H(+). The protein operates within amino-acid biosynthesis; L-lysine biosynthesis via DAP pathway; (S)-tetrahydrodipicolinate from L-aspartate: step 3/4. Functionally, catalyzes the condensation of (S)-aspartate-beta-semialdehyde [(S)-ASA] and pyruvate to 4-hydroxy-tetrahydrodipicolinate (HTPA). This chain is 4-hydroxy-tetrahydrodipicolinate synthase, found in Salmonella typhi.